A 338-amino-acid chain; its full sequence is Phenylalanine--tRNA ligase alpha subunit (338 aa).

Glu-259 contributes to the Mg(2+) binding site.

This sequence belongs to the class-II aminoacyl-tRNA synthetase family. Phe-tRNA synthetase alpha subunit type 1 subfamily. Tetramer of two alpha and two beta subunits. The cofactor is Mg(2+).

Its subcellular location is the cytoplasm. It catalyses the reaction tRNA(Phe) + L-phenylalanine + ATP = L-phenylalanyl-tRNA(Phe) + AMP + diphosphate + H(+). The polypeptide is Phenylalanine--tRNA ligase alpha subunit (Herminiimonas arsenicoxydans).